Reading from the N-terminus, the 506-residue chain is Beta-glucosidase 13 (506 aa).

An N-terminal signal peptide occupies residues 1 to 25 (MAAAGEVVMLGGILLPLLLVVAVSG). Q49 serves as a coordination point for a beta-D-glucoside. The N-linked (GlcNAc...) asparagine glycan is linked to N118. Residues H153 and 198–199 (NE) each bind a beta-D-glucoside. E199 (proton donor) is an active-site residue. C219 and C226 are joined by a disulfide. A glycan (N-linked (GlcNAc...) asparagine) is linked at N225. Y342 is a binding site for a beta-D-glucoside. N357 and N367 each carry an N-linked (GlcNAc...) asparagine glycan. E413 is a binding site for a beta-D-glucoside. The active-site Nucleophile is E413. N421 is a glycosylation site (N-linked (GlcNAc...) asparagine). A beta-D-glucoside contacts are provided by residues W462, 469-470 (EW), and F478.

Belongs to the glycosyl hydrolase 1 family.

It carries out the reaction Hydrolysis of terminal, non-reducing beta-D-glucosyl residues with release of beta-D-glucose.. The chain is Beta-glucosidase 13 (BGLU13) from Oryza sativa subsp. japonica (Rice).